The chain runs to 781 residues: Cation channel sperm-associated auxiliary subunit delta (781 aa).

The first 20 residues, 1-20, serve as a signal peptide directing secretion; the sequence is MLVLMLVVATTFRLCPLVKA. Topologically, residues 21-725 are extracellular; it reads RPLCRIRTLR…YGAFPLSIFP (705 aa). Intrachain disulfides connect Cys24–Cys370, Cys60–Cys146, Cys145–Cys153, Cys388–Cys497, Cys511–Cys705, Cys526–Cys573, and Cys625–Cys655. 6 N-linked (GlcNAc...) asparagine glycosylation sites follow: Asn231, Asn294, Asn458, Asn473, Asn539, and Asn631. The chain crosses the membrane as a helical span at residues 726–749; it reads PEITIVLLTAATLLSIWLAYMIPQ. At 750 to 781 the chain is on the cytoplasmic side; that stretch reads LLHTEQGLEGNGFWVRLYQRCRKSCACLWGRC.

It belongs to the CATSPERD family. As to quaternary structure, component of the CatSper complex or CatSpermasome composed of the core pore-forming members CATSPER1, CATSPER2, CATSPER3 and CATSPER4 as well as auxiliary members CATSPERB, CATSPERG, CATSPERD, CATSPERE, CATSPERZ, C2CD6/CATSPERT, TMEM249, TMEM262 and EFCAB9. HSPA1 may be an additional auxiliary complex member. The core complex members CATSPER1, CATSPER2, CATSPER3 and CATSPER4 form a heterotetrameric channel. The auxiliary CATSPERB, CATSPERG, CATSPERD and CATSPERE subunits form a pavilion-like structure over the pore which stabilizes the complex through interactions with CATSPER4, CATSPER3, CATSPER1 and CATSPER2 respectively. TMEM262/CATSPERH interacts with CATSPERB, further stabilizing the complex. C2CD6/CATSPERT interacts at least with CATSPERD and is required for targeting the CatSper complex in the flagellar membrane.

It localises to the cell projection. Its subcellular location is the cilium. The protein localises to the flagellum membrane. Its function is as follows. Auxiliary component of the CatSper complex, a complex involved in sperm cell hyperactivation. Sperm cell hyperactivation is needed for sperm motility which is essential late in the preparation of sperm for fertilization. Required for CATSPER1 stability before intraflagellar transport and/or incorporation of the CatSper complex channel into the flagellar membrane. This is Cation channel sperm-associated auxiliary subunit delta from Bos taurus (Bovine).